We begin with the raw amino-acid sequence, 401 residues long: 3-hydroxyisobutyryl-CoA hydrolase-like protein 1, mitochondrial (401 aa).

Residues 1–26 (MHNAKGLLGRIVRDKLWRFGYRRSLC) constitute a mitochondrion transit peptide.

Belongs to the enoyl-CoA hydratase/isomerase family.

Its subcellular location is the mitochondrion. The protein is 3-hydroxyisobutyryl-CoA hydrolase-like protein 1, mitochondrial of Arabidopsis thaliana (Mouse-ear cress).